A 150-amino-acid chain; its full sequence is 1,4-dihydroxy-2-naphthoyl-CoA hydrolase (150 aa).

Asp22 is an active-site residue.

The protein belongs to the 4-hydroxybenzoyl-CoA thioesterase family. DHNA-CoA hydrolase subfamily.

The catalysed reaction is 1,4-dihydroxy-2-naphthoyl-CoA + H2O = 1,4-dihydroxy-2-naphthoate + CoA + H(+). Its pathway is cofactor biosynthesis; phylloquinone biosynthesis. It functions in the pathway quinol/quinone metabolism; 1,4-dihydroxy-2-naphthoate biosynthesis; 1,4-dihydroxy-2-naphthoate from chorismate: step 7/7. In terms of biological role, catalyzes the hydrolysis of 1,4-dihydroxy-2-naphthoyl-CoA (DHNA-CoA) to 1,4-dihydroxy-2-naphthoate (DHNA), a reaction involved in phylloquinone (vitamin K1) biosynthesis. The protein is 1,4-dihydroxy-2-naphthoyl-CoA hydrolase of Prochlorococcus marinus (strain NATL1A).